A 180-amino-acid chain; its full sequence is Diphosphoinositol polyphosphate phosphohydrolase 2 (180 aa).

Met-1 carries the N-acetylmethionine modification. Substrate is bound by residues Arg-10, 18–20 (KKR), and 39–41 (SSR). Residues 18-144 (KKRAACLCFR…VHAEYLEKLK (127 aa)) enclose the Nudix hydrolase domain. The Mg(2+) site is built by Gly-50 and Glu-66. The short motif at 51 to 72 (GGMEPEEEPGGAAVREVYEEAG) is the Nudix box element. Glu-69 (proton acceptor) is an active-site residue. Glu-70 serves as a coordination point for Mg(2+). Substrate is bound by residues 89-91 (RKH), Arg-115, and Lys-133.

This sequence belongs to the Nudix hydrolase family. DIPP subfamily. The cofactor is Mg(2+). Mn(2+) serves as cofactor. Expressed in heart and, at lower level in skeletal muscle, pancreas and kidney.

It localises to the cytoplasm. It catalyses the reaction diphospho-myo-inositol polyphosphate + H2O = myo-inositol polyphosphate + phosphate.. The enzyme catalyses 5-diphospho-1D-myo-inositol 1,2,3,4,6-pentakisphosphate + H2O = 1D-myo-inositol hexakisphosphate + phosphate + H(+). The catalysed reaction is 3,5-bis(diphospho)-1D-myo-inositol 1,2,4,6-tetrakisphosphate + H2O = 3-diphospho-1D-myo-inositol 1,2,4,5,6-pentakisphosphate + phosphate + 2 H(+). It carries out the reaction 5-diphospho-1D-myo-inositol 1,3,4,6-tetrakisphosphate + H2O = 1D-myo-inositol 1,3,4,5,6-pentakisphosphate + phosphate + H(+). It catalyses the reaction P(1),P(6)-bis(5'-adenosyl) hexaphosphate + H2O = 2 ATP + 2 H(+). The enzyme catalyses P(1),P(5)-bis(5'-adenosyl) pentaphosphate + H2O = ADP + ATP + 2 H(+). The catalysed reaction is 5-phospho-alpha-D-ribose 1-diphosphate + H2O = alpha-D-ribose 1,5-bisphosphate + phosphate + H(+). Cleaves the beta-phosphate from diphosphoinositol polyphosphates such as PP-InsP5 (diphosphoinositol pentakisphosphate), PP-InsP4 (diphosphoinositol tetrakisphosphate) and [PP]2-InsP4 (bisdiphosphoinositol tetrakisphosphate), suggesting that it may play a role in signal transduction. Diadenosine polyphosphates, particularly Ap6A (P(1),P(6)-bis(5a-adenosyl) hexaphosphate) and Ap5A (P(1),P(5)-bis(5'-adenosyl) pentaphosphate) are downstream effectors of a signaling cascade that regulates cardiac KATP channels, can also be substrates, although with lower preference than the diphosphoinositol polyphosphates. Can also catalyze the hydrolysis of 5-phosphoribose 1-diphosphate, generating the glycolytic activator ribose 1,5-bisphosphate. Does not play a role in U8 snoRNA decapping activity. Binds U8 snoRNA. The sequence is that of Diphosphoinositol polyphosphate phosphohydrolase 2 from Homo sapiens (Human).